The sequence spans 502 residues: Cytochrome P450 71A1 (502 aa).

The helical transmembrane segment at 7 to 21 threads the bilayer; it reads LLFLAIALTFFLLKL. Cysteine 443 lines the heme pocket.

It belongs to the cytochrome P450 family. Heme is required as a cofactor. As to expression, mesocarp.

It localises to the microsome membrane. The protein resides in the endoplasmic reticulum membrane. In terms of biological role, involved in the metabolism of compounds associated with the development of flavor in the ripening fruit process, possibly by acting as trans-cinnamic acid 4-hydrolase. In Persea americana (Avocado), this protein is Cytochrome P450 71A1 (CYP71A1).